We begin with the raw amino-acid sequence, 412 residues long: WW domain-containing oxidoreductase (412 aa).

The tract at residues 1–24 is disordered; the sequence is MAALKYAGMEDTDSEDELPPGWEE. A WW 1 domain is found at 16–49; the sequence is DELPPGWEERSTKDGWVYYANHEEMKTQWEHPKT. The Nuclear localization signal motif lies at 50–55; the sequence is GKKKRC. Residues 57 to 90 enclose the WW 2 domain; sequence GALPYGWEQETDDKGQIFYVDHINKRKTYFDPRQ. NADP(+) is bound at residue 128–134; that stretch reads GANSGIG. Residue serine 257 participates in substrate binding. Tyrosine 290 acts as the Proton acceptor in catalysis.

This sequence belongs to the short-chain dehydrogenases/reductases (SDR) family.

It localises to the cytoplasm. Its subcellular location is the mitochondrion. The protein resides in the golgi apparatus. The protein localises to the lysosome. In terms of biological role, putative oxidoreductase. Acts as a tumor suppressor and plays a role in apoptosis. May function synergistically with p53/TP53 to control genotoxic stress-induced cell death. Plays a role in TGFB1 signaling and TGFB1-mediated cell death. May also play a role in tumor necrosis factor (TNF)-mediated cell death. Required for normal bone development. Inhibits Wnt signaling. This chain is WW domain-containing oxidoreductase (wwox), found in Danio rerio (Zebrafish).